We begin with the raw amino-acid sequence, 311 residues long: tRNA dimethylallyltransferase (311 aa).

13 to 20 (GPTASGKT) contributes to the ATP binding site. 15-20 (TASGKT) contributes to the substrate binding site. 2 interaction with substrate tRNA regions span residues 38–41 (DSMQ) and 166–170 (QRVLR).

It belongs to the IPP transferase family. In terms of assembly, monomer. The cofactor is Mg(2+).

The enzyme catalyses adenosine(37) in tRNA + dimethylallyl diphosphate = N(6)-dimethylallyladenosine(37) in tRNA + diphosphate. In terms of biological role, catalyzes the transfer of a dimethylallyl group onto the adenine at position 37 in tRNAs that read codons beginning with uridine, leading to the formation of N6-(dimethylallyl)adenosine (i(6)A). The polypeptide is tRNA dimethylallyltransferase (Staphylococcus aureus (strain bovine RF122 / ET3-1)).